The sequence spans 154 residues: UPF0178 protein RC1_2062 (154 aa).

This sequence belongs to the UPF0178 family.

The chain is UPF0178 protein RC1_2062 from Rhodospirillum centenum (strain ATCC 51521 / SW).